Reading from the N-terminus, the 166-residue chain is Ribonuclease H (166 aa).

Residues 5-147 (PRKRVALFTD…VDREARRQAQ (143 aa)) form the RNase H type-1 domain. Residues D14, E52, D74, and D139 each contribute to the Mg(2+) site. The interval 128–166 (GHTGHPENERVDREARRQAQSQAKTPCPPRAPTLFHEEA) is disordered. Residues 131 to 144 (GHPENERVDREARR) are compositionally biased toward basic and acidic residues.

It belongs to the RNase H family. As to quaternary structure, monomer. Mg(2+) serves as cofactor.

It catalyses the reaction Endonucleolytic cleavage to 5'-phosphomonoester.. Functionally, endonuclease that specifically degrades the RNA of RNA-DNA hybrids. This is Ribonuclease H (rnhA) from Thermus thermophilus (strain ATCC 27634 / DSM 579 / HB8).